The sequence spans 143 residues: MSRPTKFRKVDFFPKSTCFIPLGKPKCEVEEIALKIEELEAIRLKDIKELNQEECAAKMEVSRQTFQNIIDSARKKIAIALTEGNAIAIGGGNFKSKFCKFKCLDCRNTYEINCENDKHMCPSCGSNNIVCNKKTGSCENLCK.

This sequence belongs to the UPF0251 family.

In Clostridium acetobutylicum (strain ATCC 824 / DSM 792 / JCM 1419 / IAM 19013 / LMG 5710 / NBRC 13948 / NRRL B-527 / VKM B-1787 / 2291 / W), this protein is UPF0251 protein CA_C3166.